A 525-amino-acid polypeptide reads, in one-letter code: GMP synthase [glutamine-hydrolyzing] (525 aa).

One can recognise a Glutamine amidotransferase type-1 domain in the interval 9-207; it reads RVLILDFGSQ…VLEIAGCEPL (199 aa). Cysteine 86 functions as the Nucleophile in the catalytic mechanism. Active-site residues include histidine 181 and glutamate 183. Residues 208–400 form the GMPS ATP-PPase domain; the sequence is WTPANIVEDA…LGLPYDMVYR (193 aa). 235-241 contributes to the ATP binding site; the sequence is SGGVDSS.

In terms of assembly, homodimer.

The catalysed reaction is XMP + L-glutamine + ATP + H2O = GMP + L-glutamate + AMP + diphosphate + 2 H(+). It participates in purine metabolism; GMP biosynthesis; GMP from XMP (L-Gln route): step 1/1. Catalyzes the synthesis of GMP from XMP. This is GMP synthase [glutamine-hydrolyzing] from Teredinibacter turnerae (strain ATCC 39867 / T7901).